The following is a 359-amino-acid chain: 3-dehydroquinate synthase (359 aa).

Residues 71–76, 105–109, 129–130, lysine 142, lysine 151, and 169–172 contribute to the NAD(+) site; these read DGEQFK, GVIGD, TT, and CLQT. Positions 184, 247, and 264 each coordinate Zn(2+).

It belongs to the sugar phosphate cyclases superfamily. Dehydroquinate synthase family. NAD(+) is required as a cofactor. Co(2+) serves as cofactor. It depends on Zn(2+) as a cofactor.

It localises to the cytoplasm. It catalyses the reaction 7-phospho-2-dehydro-3-deoxy-D-arabino-heptonate = 3-dehydroquinate + phosphate. It functions in the pathway metabolic intermediate biosynthesis; chorismate biosynthesis; chorismate from D-erythrose 4-phosphate and phosphoenolpyruvate: step 2/7. Catalyzes the conversion of 3-deoxy-D-arabino-heptulosonate 7-phosphate (DAHP) to dehydroquinate (DHQ). This Shewanella oneidensis (strain ATCC 700550 / JCM 31522 / CIP 106686 / LMG 19005 / NCIMB 14063 / MR-1) protein is 3-dehydroquinate synthase.